The sequence spans 109 residues: Large ribosomal subunit protein eL30A (109 aa).

The protein belongs to the eukaryotic ribosomal protein eL30 family. In terms of assembly, component of the large ribosomal subunit (LSU). Mature yeast ribosomes consist of a small (40S) and a large (60S) subunit. The 40S small subunit contains 1 molecule of ribosomal RNA (18S rRNA) and at least 33 different proteins. The large 60S subunit contains 3 rRNA molecules (25S, 5.8S and 5S rRNA) and at least 46 different proteins.

It is found in the cytoplasm. Functionally, component of the ribosome, a large ribonucleoprotein complex responsible for the synthesis of proteins in the cell. The small ribosomal subunit (SSU) binds messenger RNAs (mRNAs) and translates the encoded message by selecting cognate aminoacyl-transfer RNA (tRNA) molecules. The large subunit (LSU) contains the ribosomal catalytic site termed the peptidyl transferase center (PTC), which catalyzes the formation of peptide bonds, thereby polymerizing the amino acids delivered by tRNAs into a polypeptide chain. The nascent polypeptides leave the ribosome through a tunnel in the LSU and interact with protein factors that function in enzymatic processing, targeting, and the membrane insertion of nascent chains at the exit of the ribosomal tunnel. The protein is Large ribosomal subunit protein eL30A (rpl3001) of Schizosaccharomyces pombe (strain 972 / ATCC 24843) (Fission yeast).